Here is a 780-residue protein sequence, read N- to C-terminus: Aconitate hydratase, mitochondrial (780 aa).

Residues 1 to 27 constitute a mitochondrion transit peptide; sequence MAPYSLLVSRLQKALGARQYHVASVLC. N6-succinyllysine is present on Lys-31. Lys-50 carries the N6-acetyllysine; alternate modification. Residue Lys-50 is modified to N6-succinyllysine; alternate. Gln-99 provides a ligand contact to substrate. An N6-acetyllysine; alternate mark is found at Lys-138 and Lys-144. 2 positions are modified to N6-succinyllysine; alternate: Lys-138 and Lys-144. Position 192-194 (192-194) interacts with substrate; the sequence is DSH. N6-acetyllysine; alternate is present on Lys-233. Lys-233 bears the N6-succinyllysine; alternate mark. Cys-385 lines the [4Fe-4S] cluster pocket. Lys-411 carries the N6-succinyllysine modification. [4Fe-4S] cluster is bound by residues Cys-448 and Cys-451. 2 residues coordinate substrate: Arg-474 and Arg-479. Lys-517 and Lys-523 each carry N6-acetyllysine; alternate. An N6-succinyllysine; alternate mark is found at Lys-517 and Lys-523. The span at 524-537 shows a compositional bias: basic and acidic residues; it reads LEAPDADELPRAEF. Residues 524–560 form a disordered region; the sequence is LEAPDADELPRAEFDPGQDTYQHPPKDSSGQQVDVSP. Lys-549 is subject to N6-succinyllysine. Residues 551–560 show a composition bias toward polar residues; the sequence is SSGQQVDVSP. A Phosphoserine modification is found at Ser-559. Lys-573 carries the post-translational modification N6-acetyllysine; alternate. Position 573 is an N6-succinyllysine; alternate (Lys-573). Residue Lys-591 is modified to N6-succinyllysine. Lys-605 is subject to N6-acetyllysine; alternate. Lys-605 carries the post-translational modification N6-succinyllysine; alternate. Arg-607 serves as a coordination point for substrate. Position 628 is an N6-succinyllysine (Lys-628). Ser-670 is modified (phosphoserine). Residue 670–671 coordinates substrate; that stretch reads SR. Lys-689 carries the N6-succinyllysine modification. N6-acetyllysine; alternate occurs at positions 723 and 730. 2 positions are modified to N6-succinyllysine; alternate: Lys-723 and Lys-730. An N6-acetyllysine mark is found at Lys-736 and Lys-743.

This sequence belongs to the aconitase/IPM isomerase family. In terms of assembly, monomer. The cofactor is [4Fe-4S] cluster. In terms of processing, forms covalent cross-links mediated by transglutaminase TGM2, between a glutamine and the epsilon-amino group of a lysine residue, forming homopolymers and heteropolymers.

The protein localises to the mitochondrion. It catalyses the reaction citrate = D-threo-isocitrate. Its pathway is carbohydrate metabolism; tricarboxylic acid cycle; isocitrate from oxaloacetate: step 2/2. In terms of biological role, catalyzes the isomerization of citrate to isocitrate via cis-aconitate. In Bos taurus (Bovine), this protein is Aconitate hydratase, mitochondrial (ACO2).